The following is a 427-amino-acid chain: Mitogen-activated protein kinase 8 (427 aa).

The Protein kinase domain maps to 26 to 321 (YQNLKPIGSG…VDEALQHPYI (296 aa)). ATP is bound by residues 32 to 40 (IGSGAQGIV) and lysine 55. Cysteine 116 is subject to S-nitrosocysteine. Aspartate 151 functions as the Proton acceptor in the catalytic mechanism. Threonine 183 is modified (phosphothreonine; by MAP2K7). The TXY motif lies at 183–185 (TPY). Tyrosine 185 bears the Phosphotyrosine; by MAP2K4 mark. Residues methionine 301 and serine 377 each carry the phosphoserine modification. Positions 371 to 427 (VIRGQPSPLGAAVINGSQHPSSSSSVNDVSSMSTDPTLASDTDSSLEAAAGPLGCCR) are disordered. Residues 387-403 (SQHPSSSSSVNDVSSMS) show a composition bias toward low complexity. Over residues 404–415 (TDPTLASDTDSS) the composition is skewed to polar residues.

The protein belongs to the protein kinase superfamily. CMGC Ser/Thr protein kinase family. MAP kinase subfamily. In terms of assembly, forms a complex with MAPK8IP1 and ARHGEF28. Found in a complex with SH3RF1, RAC1, MAP3K11/MLK3, MAP2K7/MKK7 and MAPK8IP1/JIP1. Found in a complex with SH3RF1, RAC2, MAP3K7/TAK1, MAP2K7/MKK7, MAPK8IP1/JIP1 and MAPK9/JNK2. Binds to at least four scaffolding proteins, MAPK8IP1/JIP-1, MAPK8IP2/JIP-2, MAPK8IP3/JIP-3/JSAP1 and SPAG9/MAPK8IP4/JIP-4. These proteins also bind other components of the JNK signaling pathway. Interacts with TP53 and WWOX. Interacts with JAMP. Interacts with HSF1 (via D domain and preferentially with hyperphosphorylated form); this interaction occurs under both normal growth conditions and immediately upon heat shock. Interacts (phosphorylated form) with NFE2; the interaction phosphorylates NFE2 in undifferentiated cells. Interacts with NFATC4. Interacts with MECOM; regulates JNK signaling. Interacts with PIN1; this interaction mediates MAPK8 conformational changes leading to the binding of MAPK8 to its substrates. Interacts with GRIPAP1. Interacts with POU5F1; phosphorylates POU5F1 at 'Ser-355'. Interacts with STMN2, STMN3 and STMN4. Interacts with HSF4. Mg(2+) serves as cofactor. Dually phosphorylated on Thr-183 and Tyr-185 by MAP2K7 and MAP2K4, which activates the enzyme. Phosphorylated by TAOK2. May be phosphorylated at Thr-183 and Tyr-185 by MAP3K1/MEKK1. Phosphorylated form is more concentrated at synapses than none-phosphorylated.

Its subcellular location is the cytoplasm. The protein localises to the nucleus. The protein resides in the synapse. It catalyses the reaction L-seryl-[protein] + ATP = O-phospho-L-seryl-[protein] + ADP + H(+). It carries out the reaction L-threonyl-[protein] + ATP = O-phospho-L-threonyl-[protein] + ADP + H(+). Its activity is regulated as follows. Activated by threonine and tyrosine phosphorylation by either of two dual specificity kinases, MAP2K4 and MAP2K7. MAP2K4 shows a strong preference for Tyr-185 while MAP2K7 phosphorylates Tyr-183 preferentially. Inhibited by dual specificity phosphatases, such as DUSP1. Inhibited by SERPINB3. Serine/threonine-protein kinase involved in various processes such as cell proliferation, differentiation, migration, transformation and programmed cell death. Extracellular stimuli such as pro-inflammatory cytokines or physical stress stimulate the stress-activated protein kinase/c-Jun N-terminal kinase (SAP/JNK) signaling pathway. In this cascade, two dual specificity kinases MAP2K4/MKK4 and MAP2K7/MKK7 phosphorylate and activate MAPK8/JNK1. In turn, MAPK8/JNK1 phosphorylates a number of transcription factors, primarily components of AP-1 such as JUN, JDP2 and ATF2 and thus regulates AP-1 transcriptional activity. Phosphorylates the replication licensing factor CDT1, inhibiting the interaction between CDT1 and the histone H4 acetylase HBO1 to replication origins. Loss of this interaction abrogates the acetylation required for replication initiation. Promotes stressed cell apoptosis by phosphorylating key regulatory factors including p53/TP53 and Yes-associates protein YAP1. In T-cells, MAPK8 and MAPK9 are required for polarized differentiation of T-helper cells into Th1 cells. Contributes to the survival of erythroid cells by phosphorylating the antagonist of cell death BAD upon EPO stimulation. Mediates starvation-induced BCL2 phosphorylation, BCL2 dissociation from BECN1, and thus activation of autophagy. Phosphorylates STMN2 and hence regulates microtubule dynamics, controlling neurite elongation in cortical neurons. In the developing brain, through its cytoplasmic activity on STMN2, negatively regulates the rate of exit from multipolar stage and of radial migration from the ventricular zone. Phosphorylates several other substrates including heat shock factor protein 4 (HSF4), the deacetylase SIRT1, ELK1, or the E3 ligase ITCH. Phosphorylates the CLOCK-BMAL1 heterodimer and plays a role in the regulation of the circadian clock. Phosphorylates the heat shock transcription factor HSF1, suppressing HSF1-induced transcriptional activity. Phosphorylates POU5F1, which results in the inhibition of POU5F1's transcriptional activity and enhances its proteasomal degradation. Phosphorylates JUND and this phosphorylation is inhibited in the presence of MEN1. In neurons, phosphorylates SYT4 which captures neuronal dense core vesicles at synapses. Phosphorylates EIF4ENIF1/4-ET in response to oxidative stress, promoting P-body assembly. Phosphorylates SIRT6 in response to oxidative stress, stimulating its mono-ADP-ribosyltransferase activity. Phosphorylates NLRP3, promoting assembly of the NLRP3 inflammasome. Phosphorylates ALKBH5 in response to reactive oxygen species (ROS), promoting ALKBH5 sumoylation and inactivation. Functionally, JNK1 isoforms display different binding patterns: beta-1 preferentially binds to c-Jun, whereas alpha-1, alpha-2, and beta-2 have a similar low level of binding to both c-Jun or ATF2. However, there is no correlation between binding and phosphorylation, which is achieved at about the same efficiency by all isoforms. The chain is Mitogen-activated protein kinase 8 (MAPK8) from Homo sapiens (Human).